A 2697-amino-acid chain; its full sequence is Target of rapamycin homolog (2697 aa).

Residues 1-25 (MLQQHGISFQMNADRQNKAATTSNR) are disordered. 7 HEAT repeats span residues 235–272 (LRVNLFFKYIFNAVRDKNPAVRIAGIDALHVVLTIVSQ), 649–687 (QTIYGVLRAVCSVIVNDQDVRVRMQVISCFGQMPRPFLA), 689–726 (LAQPEMLEVQFMALHDEKLEMQQACVTLLGRLAELNPA), 731–768 (RLRLMLLETLSQMQQSGQARLEQHSAKMIAQLAKQSPK), 815–853 (KNLKPLFEKLTHMINDSSSLHKREAALRAIGGICRSTAY), 863–900 (SLLDDLLRILKTVMSNTMRREAIKTLGILGAIDPYTHK), and 1073–1110 (KYTGELIPYLLTVLQTDKTKERVLTVKVMESIQKLTHC). The FAT domain maps to 1438-2153 (VLGRWAEQTK…IYALTVASRS (716 aa)). Disordered regions lie at residues 1945 to 1981 (TVISPPQQPQQPKKMHIPPVTRATSPPPPAQKSPQPA) and 2017 to 2039 (SNSSLPPQHHHVSPLSNDSPSNS). The span at 1969 to 1981 (SPPPPAQKSPQPA) shows a compositional bias: pro residues. Over residues 2030 to 2039 (PLSNDSPSNS) the composition is skewed to polar residues. The PI3K/PI4K catalytic domain maps to 2332 to 2647 (FSSKMNVITS…TTDSIMETIK (316 aa)). The segment at 2338–2344 (VITSKQR) is G-loop. A catalytic loop region spans residues 2512 to 2520 (GLGDRHPSN). The interval 2532-2557 (HIDFGDCFEVAMLREKFPERVPFRLT) is activation loop. Residues 2615-2635 (DPKTRKDTGGRQNMAGAVLPS) are disordered. The region spanning 2665–2697 (EPLQVTEQLAMLTEQATSPLNLCQSYIGWCPFW) is the FATC domain.

This sequence belongs to the PI3/PI4-kinase family. As to expression, ubiquitous. Expressed in all major tissues and organs, including the intestine, gonads and hypodermal cells. Expressed in neurons.

Its subcellular location is the nucleus. The enzyme catalyses L-seryl-[protein] + ATP = O-phospho-L-seryl-[protein] + ADP + H(+). The catalysed reaction is L-threonyl-[protein] + ATP = O-phospho-L-threonyl-[protein] + ADP + H(+). Functionally, serine/threonine-protein kinase that regulates the mRNA translation machinery, probably by modulating the activity of translation factors such as eIF-4G and eIF-2. It may have some protein kinase activity instead of lipid kinase activity. May play a role in P-granule degradation by autophagy in somatic cells during embryogenesis. Required, during larval development, for the establishment of the proper number of germline progenitors, probably upstream of rsks-1 and ife-1. Required for larval development. May act as a mediator of lifespan regulation by insulin signaling and nutrient sensing. The polypeptide is Target of rapamycin homolog (Caenorhabditis elegans).